The primary structure comprises 429 residues: Enolase (429 aa).

Q162 provides a ligand contact to (2R)-2-phosphoglycerate. The Proton donor role is filled by E204. 3 residues coordinate Mg(2+): D241, E286, and D313. (2R)-2-phosphoglycerate is bound by residues K338, R367, S368, and K389. K338 serves as the catalytic Proton acceptor.

This sequence belongs to the enolase family. It depends on Mg(2+) as a cofactor.

Its subcellular location is the cytoplasm. The protein resides in the secreted. It is found in the cell surface. The catalysed reaction is (2R)-2-phosphoglycerate = phosphoenolpyruvate + H2O. Its pathway is carbohydrate degradation; glycolysis; pyruvate from D-glyceraldehyde 3-phosphate: step 4/5. In terms of biological role, catalyzes the reversible conversion of 2-phosphoglycerate (2-PG) into phosphoenolpyruvate (PEP). It is essential for the degradation of carbohydrates via glycolysis. The protein is Enolase of Halalkalibacterium halodurans (strain ATCC BAA-125 / DSM 18197 / FERM 7344 / JCM 9153 / C-125) (Bacillus halodurans).